The following is a 407-amino-acid chain: Serine hydroxymethyltransferase (407 aa).

Residues Y51 and 94-95 each bind pyridoxal 5'-phosphate; that span reads GS. (6S)-5,6,7,8-tetrahydrofolate-binding positions include L117 and 121 to 123; that span reads GHL. Residues S172, H200, and H225 each coordinate pyridoxal 5'-phosphate. At K226 the chain carries N6-(pyridoxal phosphate)lysine. E242 serves as a coordination point for (6S)-5,6,7,8-tetrahydrofolate. G258 provides a ligand contact to pyridoxal 5'-phosphate.

Belongs to the SHMT family. In terms of assembly, homodimer. Requires pyridoxal 5'-phosphate as cofactor.

Its subcellular location is the cytoplasm. The catalysed reaction is (6R)-5,10-methylene-5,6,7,8-tetrahydrofolate + glycine + H2O = (6S)-5,6,7,8-tetrahydrofolate + L-serine. It functions in the pathway one-carbon metabolism; tetrahydrofolate interconversion. It participates in amino-acid biosynthesis; glycine biosynthesis; glycine from L-serine: step 1/1. Functionally, catalyzes the reversible interconversion of serine and glycine with tetrahydrofolate (THF) serving as the one-carbon carrier. This reaction serves as the major source of one-carbon groups required for the biosynthesis of purines, thymidylate, methionine, and other important biomolecules. Also exhibits THF-independent aldolase activity toward beta-hydroxyamino acids, producing glycine and aldehydes, via a retro-aldol mechanism. This is Serine hydroxymethyltransferase from Thermus thermophilus (strain ATCC 27634 / DSM 579 / HB8).